The sequence spans 138 residues: Histone H3-like centromeric protein A (138 aa).

Residues 1-40 (MGPRRQKRKPETPRRRPASPAPAAPRPTPSLGTSSRPLAR) form a disordered region. Position 2 is a n,N,N-trimethylglycine (G2). S19 is subject to Phosphoserine. The segment covering 19–28 (SPAPAAPRPT) has biased composition (pro residues). An important for flexibility of DNA ends that protrude from nucleosomes region spans residues 37-52 (PLARRRHTVLKEIRTL). The tract at residues 39–138 (ARRRHTVLKE…RIRGIQEGLG (100 aa)) is H3-like. Positions 73-114 (CVQFTRGVDFNWQAQALLALQEAAEAFLVHLFEDAYLLSLHA) are CATD.

This sequence belongs to the histone H3 family. In terms of assembly, component of centromeric nucleosomes, where DNA is wrapped around a histone octamer core. The octamer contains two molecules each of H2A, H2B, CENPA and H4 assembled in one CENPA-H4 heterotetramer and two H2A-H2B heterodimers. CENPA modulates the DNA-binding characteristics of nucleosomes so that protruding DNA ends have higher flexibility than in nucleosomes containing conventional histone H3. Inhibits binding of histone H1 to nucleosomes, since histone H1 binds preferentially to rigid DNA linkers that protrude from nucleosomes. Nucleosomes containing CENPA also contain histone H2A variants such as MACROH2A and H2A.Z/H2AZ1. The CENPA-H4 heterotetramer is more compact and structurally more rigid than corresponding H3-H4 heterotetramers. Can assemble into nucleosomes that contain both CENPA and histone H3.3; these nucleosomes interact with a single CENPC chain. Heterotrimer composed of HJURP, CENPA and histone H4, where HJURP interacts with the dimer formed by CENPA and histone H4 and prevents tetramerization of CENPA and H4. Component of the CENPA-NAC complex, at least composed of CENPA, CENPC, CENPH, CENPM, CENPN, CENPT and CENPU. Interacts (via CATD domain) with HJURP; the interaction is direct and is required for its localization to centromeres. Interacts with CENPC, CENPN and CENPT; interaction is direct. Part of a centromere complex consisting of CENPA, CENPT and CENPW. Identified in centromere complexes containing histones H2A, H2B and H4, and at least CENPA, CENPB, CENPC, CENPT, CENPN, HJURP, SUPT16H, SSRP1 and RSF1. Can self-associate. The CENPA-H4 heterotetramer can bind DNA by itself (in vitro). Interacts with CDK1, PPP1CA and RBBP7. In terms of processing, trimethylated by NTMT1 at the N-terminal glycine after cleavage of Met-1. Methylation is low before incorporation into nucleosomes and increases with cell cycle progression, with the highest levels in mitotic nucleosomes. Poly-ADP-ribosylated by PARP1.

It localises to the nucleus. The protein localises to the chromosome. The protein resides in the centromere. Its function is as follows. Histone H3-like nucleosomal protein that is specifically found in centromeric nucleosomes. Replaces conventional H3 in the nucleosome core of centromeric chromatin that serves as an assembly site for the inner kinetochore. The presence of CENPA subtly modifies the nucleosome structure and the way DNA is wrapped around the nucleosome and gives rise to protruding DNA ends that are less well-ordered and rigid compared to nucleosomes containing histone H3. May serve as an epigenetic mark that propagates centromere identity through replication and cell division. Required for recruitment and assembly of kinetochore proteins, and as a consequence required for progress through mitosis, chromosome segregation and cytokinesis. This Bos taurus (Bovine) protein is Histone H3-like centromeric protein A (CENPA).